Consider the following 243-residue polypeptide: Chromosome partition protein MukE (243 aa).

The segment at 223 to 243 (LMENDTKSADEIDEEFDGEQE) is disordered. Residues 233 to 243 (EIDEEFDGEQE) show a composition bias toward acidic residues.

This sequence belongs to the MukE family. Interacts, and probably forms a ternary complex, with MukF and MukB. The complex formation is stimulated by calcium or magnesium.

Its subcellular location is the cytoplasm. The protein localises to the nucleoid. Functionally, involved in chromosome condensation, segregation and cell cycle progression. May participate in facilitating chromosome segregation by condensation DNA from both sides of a centrally located replisome during cell division. Probably acts via its interaction with MukB and MukF. The polypeptide is Chromosome partition protein MukE (Haemophilus influenzae (strain ATCC 51907 / DSM 11121 / KW20 / Rd)).